Consider the following 141-residue polypeptide: Hemoglobin subunit alpha (141 aa).

Residues 1–141 form the Globin domain; sequence VLSAADKSNV…VSTVLTSKYR (141 aa). The residue at position 3 (Ser3) is a Phosphoserine. Lys7 and Lys11 each carry N6-succinyllysine. N6-acetyllysine; alternate is present on Lys16. An N6-succinyllysine; alternate modification is found at Lys16. Tyr24 is subject to Phosphotyrosine. Ser35 carries the phosphoserine modification. Position 40 is an N6-succinyllysine (Lys40). Residue Ser49 is modified to Phosphoserine. O2 is bound at residue His58. His87 provides a ligand contact to heme b. Ser102 carries the phosphoserine modification. Thr108 carries the post-translational modification Phosphothreonine. Ser124 is subject to Phosphoserine. Residues Thr134 and Thr137 each carry the phosphothreonine modification. Ser138 carries the phosphoserine modification.

The protein belongs to the globin family. As to quaternary structure, heterotetramer of two alpha chains and two beta chains. In terms of tissue distribution, red blood cells.

In terms of biological role, involved in oxygen transport from the lung to the various peripheral tissues. Functionally, hemopressin acts as an antagonist peptide of the cannabinoid receptor CNR1. Hemopressin-binding efficiently blocks cannabinoid receptor CNR1 and subsequent signaling. The sequence is that of Hemoglobin subunit alpha (HBA) from Rangifer tarandus (Reindeer).